A 1372-amino-acid chain; its full sequence is DNA-directed RNA polymerase subunit beta (1372 aa).

Belongs to the RNA polymerase beta chain family. The RNAP catalytic core consists of 2 alpha, 1 beta, 1 beta' and 1 omega subunit. When a sigma factor is associated with the core the holoenzyme is formed, which can initiate transcription.

It carries out the reaction RNA(n) + a ribonucleoside 5'-triphosphate = RNA(n+1) + diphosphate. Functionally, DNA-dependent RNA polymerase catalyzes the transcription of DNA into RNA using the four ribonucleoside triphosphates as substrates. This Psychrobacter arcticus (strain DSM 17307 / VKM B-2377 / 273-4) protein is DNA-directed RNA polymerase subunit beta.